We begin with the raw amino-acid sequence, 302 residues long: Nucleotide-binding protein Rsph17029_0317 (302 aa).

15–22 contributes to the ATP binding site; it reads GPSGAGRT. 62–65 provides a ligand contact to GTP; sequence DVRN.

Belongs to the RapZ-like family.

Its function is as follows. Displays ATPase and GTPase activities. In Cereibacter sphaeroides (strain ATCC 17029 / ATH 2.4.9) (Rhodobacter sphaeroides), this protein is Nucleotide-binding protein Rsph17029_0317.